We begin with the raw amino-acid sequence, 572 residues long: Sulfite reductase [NADPH] hemoprotein beta-component (572 aa).

4 residues coordinate [4Fe-4S] cluster: Cys-436, Cys-442, Cys-481, and Cys-485. Position 485 (Cys-485) interacts with siroheme.

The protein belongs to the nitrite and sulfite reductase 4Fe-4S domain family. In terms of assembly, alpha(8)-beta(8). The alpha component is a flavoprotein, the beta component is a hemoprotein. The cofactor is siroheme. [4Fe-4S] cluster serves as cofactor.

The catalysed reaction is hydrogen sulfide + 3 NADP(+) + 3 H2O = sulfite + 3 NADPH + 4 H(+). Its pathway is sulfur metabolism; hydrogen sulfide biosynthesis; hydrogen sulfide from sulfite (NADPH route): step 1/1. In terms of biological role, component of the sulfite reductase complex that catalyzes the 6-electron reduction of sulfite to sulfide. This is one of several activities required for the biosynthesis of L-cysteine from sulfate. In Bacillus pumilus (strain SAFR-032), this protein is Sulfite reductase [NADPH] hemoprotein beta-component.